Reading from the N-terminus, the 286-residue chain is ATP synthase gamma chain (286 aa).

Belongs to the ATPase gamma chain family. F-type ATPases have 2 components, CF(1) - the catalytic core - and CF(0) - the membrane proton channel. CF(1) has five subunits: alpha(3), beta(3), gamma(1), delta(1), epsilon(1). CF(0) has three main subunits: a, b and c.

It localises to the cell inner membrane. In terms of biological role, produces ATP from ADP in the presence of a proton gradient across the membrane. The gamma chain is believed to be important in regulating ATPase activity and the flow of protons through the CF(0) complex. This is ATP synthase gamma chain from Leptospira borgpetersenii serovar Hardjo-bovis (strain JB197).